The following is a 284-amino-acid chain: tRNA pseudouridine synthase B (284 aa).

D40 acts as the Nucleophile in catalysis.

This sequence belongs to the pseudouridine synthase TruB family. Type 1 subfamily.

The enzyme catalyses uridine(55) in tRNA = pseudouridine(55) in tRNA. Responsible for synthesis of pseudouridine from uracil-55 in the psi GC loop of transfer RNAs. This Helicobacter hepaticus (strain ATCC 51449 / 3B1) protein is tRNA pseudouridine synthase B.